We begin with the raw amino-acid sequence, 807 residues long: FAD-linked oxidoreductase pytB (807 aa).

A signal peptide spans 1-18 (MRFLGIAAVATFSTVVSA). 8 N-linked (GlcNAc...) asparagine glycosylation sites follow: N45, N106, N120, N242, N295, N351, N419, and N699. Positions 60 to 231 (FDELPVLLAY…VEFTLSLTSI (172 aa)) constitute an FAD-binding PCMH-type domain.

Belongs to the oxygen-dependent FAD-linked oxidoreductase family. The cofactor is FAD.

Its pathway is secondary metabolite biosynthesis. FAD-linked oxidoreductase; part of the gene cluster that mediates the biosynthesis of pyranterreones, a family of antioxidative compounds. The first step of pyranonigrins biosynthesis is performed by the hybrid PKS-NRPS synthetase pytA that condenses 4 malonyl-CoA units ato the acetyl starter unit by the modular PKS of pytA. The acyl chain is then connected to an L-serine through the amide bond by the modular NRPS of pytA. A tetramic acid is formed and released from the PKS-NRPS pytA to give pyranterreone 5 with the help of the thioesterase pytI. Pyranterreone 5 could be methylated by pytC to afford pyranterreone 6. Both pyranterreones 5 and 6 are subsequently oxidized by the FAD-linked oxidoreductase pytB and the cytochrome P450 monooxygenase pytD to form the fused gamma-pyrone core, resulting in pyranterreones 7 and 11, respectively. The hydroxy group at C-8 of pyranterreones 7 and 11 are dehydrated by the aspartyl protease pytH to form a delta-7 double bond to give pyranterreones 3 and 1, 2 accordingly. The exo-methylene of pyranterreone 3 could be reduced into a pendant methyl by reductase pytE to provide pyranterreone 4, also known as cordylactam. Pyranterreone 4 can be reconverted to pyranterreone 3 through pytB-catalyzed dehydrogenation or further oxidized to pyranterreones 9 and 10. The sequence is that of FAD-linked oxidoreductase pytB from Aspergillus terreus (strain NIH 2624 / FGSC A1156).